The sequence spans 388 residues: 8-amino-7-oxononanoate synthase (388 aa).

Arg23 serves as a coordination point for substrate. 110-111 (GF) serves as a coordination point for pyridoxal 5'-phosphate. His135 is a binding site for substrate. The pyridoxal 5'-phosphate site is built by Ser181, His209, and Thr235. An N6-(pyridoxal phosphate)lysine modification is found at Lys238. Residue Thr352 participates in substrate binding.

This sequence belongs to the class-II pyridoxal-phosphate-dependent aminotransferase family. BioF subfamily. In terms of assembly, homodimer. Pyridoxal 5'-phosphate is required as a cofactor.

It catalyses the reaction 6-carboxyhexanoyl-[ACP] + L-alanine + H(+) = (8S)-8-amino-7-oxononanoate + holo-[ACP] + CO2. Its pathway is cofactor biosynthesis; biotin biosynthesis. Functionally, catalyzes the decarboxylative condensation of pimeloyl-[acyl-carrier protein] and L-alanine to produce 8-amino-7-oxononanoate (AON), [acyl-carrier protein], and carbon dioxide. In Sodalis glossinidius (strain morsitans), this protein is 8-amino-7-oxononanoate synthase.